A 426-amino-acid polypeptide reads, in one-letter code: tRNA (guanine(37)-N(1))-methyltransferase (426 aa).

S-adenosyl-L-methionine-binding positions include histidine 203, 242-243, 269-270, and asparagine 292; these read DL and DA. Positions 374–426 are disordered; it reads RISFKMPTLKKRKDTENNDDQENNNNSSNNNNNNKIDYNEAVSSGGEGKKIKH. Residues 396-407 are compositionally biased toward low complexity; the sequence is NNNNSSNNNNNN.

It belongs to the class I-like SAM-binding methyltransferase superfamily. TRM5/TYW2 family. In terms of assembly, monomer.

It localises to the mitochondrion matrix. It is found in the nucleus. Its subcellular location is the cytoplasm. The catalysed reaction is guanosine(37) in tRNA + S-adenosyl-L-methionine = N(1)-methylguanosine(37) in tRNA + S-adenosyl-L-homocysteine + H(+). Functionally, specifically methylates the N1 position of guanosine-37 in various cytoplasmic and mitochondrial tRNAs. Methylation is not dependent on the nature of the nucleoside 5' of the target nucleoside. This is the first step in the biosynthesis of wybutosine (yW), a modified base adjacent to the anticodon of tRNAs and required for accurate decoding. This chain is tRNA (guanine(37)-N(1))-methyltransferase (trmt5), found in Heterostelium pallidum (strain ATCC 26659 / Pp 5 / PN500) (Cellular slime mold).